A 132-amino-acid polypeptide reads, in one-letter code: Small ribosomal subunit protein uS8 (132 aa).

Belongs to the universal ribosomal protein uS8 family. As to quaternary structure, part of the 30S ribosomal subunit. Contacts proteins S5 and S12.

Its function is as follows. One of the primary rRNA binding proteins, it binds directly to 16S rRNA central domain where it helps coordinate assembly of the platform of the 30S subunit. This chain is Small ribosomal subunit protein uS8, found in Christiangramia forsetii (strain DSM 17595 / CGMCC 1.15422 / KT0803) (Gramella forsetii).